The following is a 114-amino-acid chain: T cell receptor alpha variable 3 (114 aa).

Residues 1 to 20 (MASAPISMLAMLFTLSGLRA) form the signal peptide. The region spanning 21–114 (QSVAQPEDQV…SALYFCAVRD (94 aa)) is the Ig-like domain. Residues Cys-42 and Cys-110 are joined by a disulfide bond. The N-linked (GlcNAc...) asparagine glycan is linked to Asn-87.

As to quaternary structure, alpha-beta TR is a heterodimer composed of an alpha and beta chain; disulfide-linked. The alpha-beta TR is associated with the transmembrane signaling CD3 coreceptor proteins to form the TR-CD3 (TcR or TCR). The assembly of alpha-beta TR heterodimers with CD3 occurs in the endoplasmic reticulum where a single alpha-beta TR heterodimer associates with one CD3D-CD3E heterodimer, one CD3G-CD3E heterodimer and one CD247 homodimer forming a stable octameric structure. CD3D-CD3E and CD3G-CD3E heterodimers preferentially associate with TR alpha and TR beta chains, respectively. The association of the CD247 homodimer is the last step of TcR assembly in the endoplasmic reticulum and is required for transport to the cell surface.

The protein localises to the cell membrane. Its function is as follows. V region of the variable domain of T cell receptor (TR) alpha chain that participates in the antigen recognition. Alpha-beta T cell receptors are antigen specific receptors which are essential to the immune response and are present on the cell surface of T lymphocytes. Recognize peptide-major histocompatibility (MH) (pMH) complexes that are displayed by antigen presenting cells (APC), a prerequisite for efficient T cell adaptive immunity against pathogens. Binding of alpha-beta TR to pMH complex initiates TR-CD3 clustering on the cell surface and intracellular activation of LCK that phosphorylates the ITAM motifs of CD3G, CD3D, CD3E and CD247 enabling the recruitment of ZAP70. In turn ZAP70 phosphorylates LAT, which recruits numerous signaling molecules to form the LAT signalosome. The LAT signalosome propagates signal branching to three major signaling pathways, the calcium, the mitogen-activated protein kinase (MAPK) kinase and the nuclear factor NF-kappa-B (NF-kB) pathways, leading to the mobilization of transcription factors that are critical for gene expression and essential for T cell growth and differentiation. The T cell repertoire is generated in the thymus, by V-(D)-J rearrangement. This repertoire is then shaped by intrathymic selection events to generate a peripheral T cell pool of self-MH restricted, non-autoaggressive T cells. Post-thymic interaction of alpha-beta TR with the pMH complexes shapes TR structural and functional avidity. This Homo sapiens (Human) protein is T cell receptor alpha variable 3.